A 509-amino-acid polypeptide reads, in one-letter code: UDP-N-acetylmuramoyl-L-alanyl-D-glutamate--2,6-diaminopimelate ligase (509 aa).

S30 contacts UDP-N-acetyl-alpha-D-muramoyl-L-alanyl-D-glutamate. 110–116 (GTNGKTT) is an ATP binding site. Residues 152–153 (TT), S179, Q185, and R187 each bind UDP-N-acetyl-alpha-D-muramoyl-L-alanyl-D-glutamate. Residue K219 is modified to N6-carboxylysine. Meso-2,6-diaminopimelate-binding positions include R385, 409-412 (DNPR), G476, and E480. The Meso-diaminopimelate recognition motif motif lies at 409–412 (DNPR).

It belongs to the MurCDEF family. MurE subfamily. Mg(2+) is required as a cofactor. Post-translationally, carboxylation is probably crucial for Mg(2+) binding and, consequently, for the gamma-phosphate positioning of ATP.

The protein resides in the cytoplasm. The enzyme catalyses UDP-N-acetyl-alpha-D-muramoyl-L-alanyl-D-glutamate + meso-2,6-diaminopimelate + ATP = UDP-N-acetyl-alpha-D-muramoyl-L-alanyl-gamma-D-glutamyl-meso-2,6-diaminopimelate + ADP + phosphate + H(+). It participates in cell wall biogenesis; peptidoglycan biosynthesis. Catalyzes the addition of meso-diaminopimelic acid to the nucleotide precursor UDP-N-acetylmuramoyl-L-alanyl-D-glutamate (UMAG) in the biosynthesis of bacterial cell-wall peptidoglycan. This chain is UDP-N-acetylmuramoyl-L-alanyl-D-glutamate--2,6-diaminopimelate ligase, found in Geobacter sulfurreducens (strain ATCC 51573 / DSM 12127 / PCA).